The following is a 342-amino-acid chain: Methionyl-tRNA formyltransferase (342 aa).

108 to 111 contributes to the (6S)-5,6,7,8-tetrahydrofolate binding site; that stretch reads SLLP.

This sequence belongs to the Fmt family.

The catalysed reaction is L-methionyl-tRNA(fMet) + (6R)-10-formyltetrahydrofolate = N-formyl-L-methionyl-tRNA(fMet) + (6S)-5,6,7,8-tetrahydrofolate + H(+). Attaches a formyl group to the free amino group of methionyl-tRNA(fMet). The formyl group appears to play a dual role in the initiator identity of N-formylmethionyl-tRNA by promoting its recognition by IF2 and preventing the misappropriation of this tRNA by the elongation apparatus. The protein is Methionyl-tRNA formyltransferase of Prochlorococcus marinus (strain MIT 9303).